The chain runs to 363 residues: Eukaryotic translation initiation factor 3 subunit H (363 aa).

The MPN domain maps to 13–163; that stretch reads VQVEALVVMK…LRAFRLSTAF (151 aa).

It belongs to the eIF-3 subunit H family. As to quaternary structure, component of the eukaryotic translation initiation factor 3 (eIF-3) complex.

It is found in the cytoplasm. Component of the eukaryotic translation initiation factor 3 (eIF-3) complex, which is involved in protein synthesis of a specialized repertoire of mRNAs and, together with other initiation factors, stimulates binding of mRNA and methionyl-tRNAi to the 40S ribosome. The eIF-3 complex specifically targets and initiates translation of a subset of mRNAs involved in cell proliferation. The protein is Eukaryotic translation initiation factor 3 subunit H of Pyricularia oryzae (strain 70-15 / ATCC MYA-4617 / FGSC 8958) (Rice blast fungus).